The chain runs to 54 residues: Large ribosomal subunit protein bL32c (54 aa).

This sequence belongs to the bacterial ribosomal protein bL32 family.

Its subcellular location is the plastid. It localises to the chloroplast. This Lactuca sativa (Garden lettuce) protein is Large ribosomal subunit protein bL32c.